The chain runs to 1014 residues: C2 domain-containing protein 5 (1014 aa).

The C2 domain maps to M1–F109. D19, D26, D76, D78, S81, and D84 together coordinate Ca(2+). 4 disordered regions span residues L274–G328, E639–D669, A801–G878, and E992–T1014. Residues N275 to Y292 are compositionally biased toward polar residues. Residues S293–G318 show a composition bias toward low complexity. A compositionally biased stretch (gly residues) spans M319–G328. The segment covering S830–S840 has biased composition (polar residues). Positions A993–A1006 are enriched in low complexity.

The cofactor is Ca(2+).

The protein resides in the cytoplasmic vesicle membrane. The protein localises to the cytoplasm. Its subcellular location is the cell cortex. It is found in the cell membrane. It localises to the cell projection. The protein resides in the ruffle. In terms of biological role, may be required for insulin-stimulated glucose transport and glucose transporter SLC2A4/GLUT4 translocation from intracellular glucose storage vesicle (GSV) to the plasma membrane (PM) in adipocytes. May bind phospholipid membranes in a calcium-dependent manner. This Xenopus tropicalis (Western clawed frog) protein is C2 domain-containing protein 5 (c2cd5).